We begin with the raw amino-acid sequence, 321 residues long: Putative membrane-bound redox modulator Alx (321 aa).

Residues 1–6 (MNTVGT) lie on the Periplasmic side of the membrane. A helical membrane pass occupies residues 7–27 (PLLWGGFAVVVAIMLAIDLLL). Residues 28–43 (QGRRGAHAMTMKQAAA) are Cytoplasmic-facing. A helical membrane pass occupies residues 44-64 (WSLVWVTLSLLFNAAFWWYLV). Residues 65–89 (QTEGRAVADPQALAFLTGYLIEKSL) are Periplasmic-facing. The helical transmembrane segment at 90 to 110 (AVDNVFVWLMLFSYFSVPAAL) threads the bilayer. Residues 111-113 (QRR) are Cytoplasmic-facing. The helical transmembrane segment at 114 to 134 (VLVYGVLGAIVLRTIMIFTGS) threads the bilayer. A topological domain (periplasmic) is located at residue Trp135. The chain crosses the membrane as a helical span at residues 136-156 (LISQFDWILYIFGAFLLFTGV). The Cytoplasmic portion of the chain corresponds to 157-198 (KMALAHEDESGIGDKPLVRWLRGHLRMTDTIDNEHFFVRKNG). The chain crosses the membrane as a helical span at residues 199–219 (LLYATPLMLVLILVELSDVIF). Over 220–225 (AVDSIP) the chain is Periplasmic. A helical transmembrane segment spans residues 226-246 (AIFAVTTDPFIVLTSNLFAIL). At 247 to 261 (GLRAMYFLLAGVAER) the chain is on the cytoplasmic side. The helical transmembrane segment at 262-282 (FSMLKYGLAVILVFIGIKMLI) threads the bilayer. The Periplasmic portion of the chain corresponds to 283-286 (VDFY). Residues 287–307 (HIPIAVSLGVVFGILVMTFII) traverse the membrane as a helical segment. Topologically, residues 308–321 (NAWVNYRHDKQRGG) are cytoplasmic.

It belongs to the TerC family.

The protein resides in the cell inner membrane. In terms of biological role, has been proposed to be a redox modulator. This chain is Putative membrane-bound redox modulator Alx, found in Escherichia coli (strain K12).